Consider the following 531-residue polypeptide: Pescadillo homolog (531 aa).

The region spanning Ser-309–Pro-398 is the BRCT domain.

Belongs to the pescadillo family.

The protein localises to the nucleus. It is found in the nucleolus. It localises to the nucleoplasm. Required for maturation of ribosomal RNAs and formation of the large ribosomal subunit. This chain is Pescadillo homolog, found in Caenorhabditis elegans.